An 81-amino-acid chain; its full sequence is Sulfur carrier protein TusA (81 aa).

Cys-19 acts as the Cysteine persulfide intermediate in catalysis.

Belongs to the sulfur carrier protein TusA family.

The protein localises to the cytoplasm. In terms of biological role, sulfur carrier protein which probably makes part of a sulfur-relay system. This is Sulfur carrier protein TusA from Shewanella putrefaciens (strain CN-32 / ATCC BAA-453).